A 238-amino-acid chain; its full sequence is 7-cyano-7-deazaguanine synthase (238 aa).

Phenylalanine 15–leucine 25 is an ATP binding site. Zn(2+) contacts are provided by cysteine 203, cysteine 218, cysteine 221, and cysteine 224.

The protein belongs to the QueC family. The cofactor is Zn(2+).

The enzyme catalyses 7-carboxy-7-deazaguanine + NH4(+) + ATP = 7-cyano-7-deazaguanine + ADP + phosphate + H2O + H(+). The protein operates within purine metabolism; 7-cyano-7-deazaguanine biosynthesis. Catalyzes the ATP-dependent conversion of 7-carboxy-7-deazaguanine (CDG) to 7-cyano-7-deazaguanine (preQ(0)). This chain is 7-cyano-7-deazaguanine synthase, found in Alkalilimnicola ehrlichii (strain ATCC BAA-1101 / DSM 17681 / MLHE-1).